The primary structure comprises 302 residues: Fluoroacetate dehalogenase (302 aa).

The region spanning 32–270 (PPLLLLHGFP…LDVWRKWASD (239 aa)) is the AB hydrolase-1 domain. D110 serves as the catalytic Nucleophile. The fluoroacetate site is built by R111, R114, H155, W156, and Y219. Catalysis depends on H280, which acts as the Proton acceptor.

The protein belongs to the AB hydrolase superfamily. Epoxide hydrolase family. As to quaternary structure, homodimer.

The catalysed reaction is a haloacetate + H2O = a halide anion + glycolate + H(+). It catalyses the reaction fluoroacetate + H2O = fluoride + glycolate + H(+). The enzyme catalyses chloroacetate + H2O = glycolate + chloride + H(+). In terms of biological role, catalyzes the hydrolytic defluorination of fluoroacetate to produce glycolate. Has lower activity towards chloroacetate and bromoacetate. This chain is Fluoroacetate dehalogenase, found in Rhodopseudomonas palustris (strain ATCC BAA-98 / CGA009).